A 499-amino-acid polypeptide reads, in one-letter code: Cobyric acid synthase (499 aa).

Residues 251–442 (SLDIAVVSLK…LHGVFDNLEW (192 aa)) enclose the GATase cobBQ-type domain. The active-site Nucleophile is C332. H434 is an active-site residue.

This sequence belongs to the CobB/CobQ family. CobQ subfamily.

Its pathway is cofactor biosynthesis; adenosylcobalamin biosynthesis. Catalyzes amidations at positions B, D, E, and G on adenosylcobyrinic A,C-diamide. NH(2) groups are provided by glutamine, and one molecule of ATP is hydrogenolyzed for each amidation. This is Cobyric acid synthase from Streptococcus sanguinis (strain SK36).